Reading from the N-terminus, the 273-residue chain is Shikimate dehydrogenase (NADP(+)) (273 aa).

Residues 19–21 (SKS) and threonine 66 contribute to the shikimate site. Catalysis depends on lysine 70, which acts as the Proton acceptor. Shikimate contacts are provided by asparagine 91 and aspartate 107. NADP(+) contacts are provided by residues 131–135 (GAGGA) and methionine 218. Tyrosine 220 provides a ligand contact to shikimate. Glycine 242 provides a ligand contact to NADP(+).

This sequence belongs to the shikimate dehydrogenase family. As to quaternary structure, homodimer.

The enzyme catalyses shikimate + NADP(+) = 3-dehydroshikimate + NADPH + H(+). Its pathway is metabolic intermediate biosynthesis; chorismate biosynthesis; chorismate from D-erythrose 4-phosphate and phosphoenolpyruvate: step 4/7. In terms of biological role, involved in the biosynthesis of the chorismate, which leads to the biosynthesis of aromatic amino acids. Catalyzes the reversible NADPH linked reduction of 3-dehydroshikimate (DHSA) to yield shikimate (SA). The polypeptide is Shikimate dehydrogenase (NADP(+)) (Buchnera aphidicola subsp. Acyrthosiphon pisum (strain 5A)).